The chain runs to 124 residues: Acidic phospholipase A2 A (124 aa).

Intrachain disulfides connect Cys26–Cys116, Cys28–Cys44, Cys43–Cys95, Cys49–Cys124, Cys50–Cys88, Cys57–Cys81, and Cys75–Cys86. 3 residues coordinate Ca(2+): Tyr27, Gly29, and Gly31. The active site involves His47. Asp48 contacts Ca(2+). The active site involves Asp89.

This sequence belongs to the phospholipase A2 family. Group II subfamily. D49 sub-subfamily. The cofactor is Ca(2+). As to expression, expressed by the venom gland.

It is found in the secreted. The catalysed reaction is a 1,2-diacyl-sn-glycero-3-phosphocholine + H2O = a 1-acyl-sn-glycero-3-phosphocholine + a fatty acid + H(+). Its function is as follows. PLA2 catalyzes the calcium-dependent hydrolysis of the 2-acyl groups in 3-sn-phosphoglycerides. The protein is Acidic phospholipase A2 A of Gloydius halys (Chinese water mocassin).